Reading from the N-terminus, the 384-residue chain is Secreted effector protein EspF(U) (384 aa).

6 consecutive repeat copies span residues 96–142, 143–189, 190–236, 237–283, 284–330, and 331–377. A 6 X 48 AA approximate tandem repeats region spans residues 96–377; sequence IXPARSMAEH…RLMQHLAEHG (282 aa). Residues 247–266 are disordered; it reads IPPAPNWPAPPPPVQNEQSR. Residues 248 to 260 show a composition bias toward pro residues; that stretch reads PPAPNWPAPPPPV.

This sequence belongs to the EspF(U)/TccP family. As to quaternary structure, interacts with host BAIAP2 and host WASL/N-WASP. Can also interact with host proteins BAIAP2L1 and WAS/WASP.

It localises to the secreted. The protein resides in the host cytoplasm. Required for efficient pedestal formation in host epithelial cells during infection. Acts as an intermediate between Tir (via host BAIAP2) and host WASL/N-WASP. Directly binds and activates WASL/N-WASP, which stimulates actin polymerization and leads to the formation of actin pedestals at the sites of bacterial adhesion. This chain is Secreted effector protein EspF(U) (espF(U)), found in Escherichia coli O157:H7.